The primary structure comprises 276 residues: Pantothenate synthetase (276 aa).

ATP is bound at residue 27–34 (MGALHKGH). His-34 (proton donor) is an active-site residue. Gln-58 contributes to the (R)-pantoate binding site. Gln-58 lines the beta-alanine pocket. An ATP-binding site is contributed by 147 to 150 (GKKD). Gln-153 serves as a coordination point for (R)-pantoate. Residues Val-176 and 184 to 187 (LSSR) each bind ATP.

The protein belongs to the pantothenate synthetase family. In terms of assembly, homodimer.

It is found in the cytoplasm. It catalyses the reaction (R)-pantoate + beta-alanine + ATP = (R)-pantothenate + AMP + diphosphate + H(+). Its pathway is cofactor biosynthesis; (R)-pantothenate biosynthesis; (R)-pantothenate from (R)-pantoate and beta-alanine: step 1/1. Its function is as follows. Catalyzes the condensation of pantoate with beta-alanine in an ATP-dependent reaction via a pantoyl-adenylate intermediate. This is Pantothenate synthetase from Helicobacter acinonychis (strain Sheeba).